The primary structure comprises 323 residues: tRNA-dihydrouridine(16) synthase (323 aa).

Residues 7-9 (PME) and Q68 each bind FMN. C98 functions as the Proton donor in the catalytic mechanism. Residues K139, 200 to 202 (NGE), and 224 to 225 (CR) each bind FMN.

The protein belongs to the Dus family. DusC subfamily. The cofactor is FMN.

It carries out the reaction 5,6-dihydrouridine(16) in tRNA + NADP(+) = uridine(16) in tRNA + NADPH + H(+). The enzyme catalyses 5,6-dihydrouridine(16) in tRNA + NAD(+) = uridine(16) in tRNA + NADH + H(+). Its function is as follows. Catalyzes the synthesis of 5,6-dihydrouridine (D), a modified base found in the D-loop of most tRNAs, via the reduction of the C5-C6 double bond in target uridines. Specifically modifies U16 in tRNAs. The polypeptide is tRNA-dihydrouridine(16) synthase (Vibrio cholerae serotype O1 (strain ATCC 39315 / El Tor Inaba N16961)).